The chain runs to 299 residues: Ribosome-inactivating protein saporin-6 (299 aa).

An N-terminal signal peptide occupies residues 1–24 (MKIYVVATIAWILLQFSAWTTTDA). E200 is an active-site residue. Positions 278 to 299 (SSNEANSTVRHYGPLKPTLLIT) are excised as a propeptide. An N-linked (GlcNAc...) asparagine glycan is attached at N283.

This sequence belongs to the ribosome-inactivating protein family. Type 1 RIP subfamily. As to expression, seeds and leaves of the plant.

It carries out the reaction Endohydrolysis of the N-glycosidic bond at one specific adenosine on the 28S rRNA.. Functionally, ribosome-inactivating protein of type 1, inhibits protein synthesis in animal cells. Useful as immunotoxin for pharmacological applications. The polypeptide is Ribosome-inactivating protein saporin-6 (SAP6) (Saponaria officinalis (Common soapwort)).